The primary structure comprises 864 residues: Leucine--tRNA ligase (864 aa).

Positions 42–52 (PYPSGKLHMGH) match the 'HIGH' region motif. A 'KMSKS' region motif is present at residues 624-628 (KMSKS). K627 contributes to the ATP binding site.

This sequence belongs to the class-I aminoacyl-tRNA synthetase family.

The protein resides in the cytoplasm. It carries out the reaction tRNA(Leu) + L-leucine + ATP = L-leucyl-tRNA(Leu) + AMP + diphosphate. This Burkholderia cenocepacia (strain HI2424) protein is Leucine--tRNA ligase.